The chain runs to 467 residues: MQFAGKKTDQVTTSNPGFEEEEEEEEELQQDWSQLASLVSKNAALSLPKRGEKDYEPDGTNLQDLLLYNASKAMFDTISDSIRGTTVKSEVRGYYVPHKHQAVLLKPKGSFMQTMGRADSTGELWLDFHEFVYLAERGTILPYYRLEAGSNKSSKHETEILLSMEDLYSLFSSQQEMDQYFVFAHLKRLGFILKPSNQEAAVKTSFFPLKKQRSNLQAITWRLLSLFKIQELSLFSGFFYSKWNFFFRKYTTSPQLYQGLNRLVRSVAVPKNKKELLDAQSDREFQKVKDIPLTFKVWKPHSNFKKRDPGLPDFQVFVYNKNDDLQHFPTYKELRSMFSSLDYKFEFLSEIEDDDDWETNSYVEDIPRKEYIHKRSAKSQTEKSESSMKASFQKKTAQSSTKKKRKAYPPHIQQNRRLKTGYRSFIIAIMDNGLISFVKMSEADFGSESVWYTPNTQKKVDQRWKKH.

Disordered stretches follow at residues M1–W32 and K374–Q413. Acidic residues predominate over residues F18 to Q29. Residues T401–Q413 show a composition bias toward basic residues.

The protein belongs to the SEN54 family. TRNA splicing endonuclease is a heterotetramer composed of SEN2, SEN15, SEN34 and SEN54. Interacts directly with SEN2.

The protein resides in the nucleus. Its subcellular location is the endomembrane system. It is found in the mitochondrion outer membrane. Its function is as follows. Non-catalytic subunit of the tRNA-splicing endonuclease complex, a complex responsible for identification and cleavage of the splice sites in pre-tRNA. It cleaves pre-tRNA at the 5' and 3' splice sites to release the intron. The products are an intron and two tRNA half-molecules bearing 2',3' cyclic phosphate and 5'-OH termini. There are no conserved sequences at the splice sites, but the intron is invariably located at the same site in the gene, placing the splice sites an invariant distance from the constant structural features of the tRNA body. May be required to embody the molecular ruler of the complex. The chain is tRNA-splicing endonuclease subunit SEN54 (SEN54) from Saccharomyces cerevisiae (strain ATCC 204508 / S288c) (Baker's yeast).